The chain runs to 574 residues: Hyaluronan synthase 3 (574 aa).

Topologically, residues 1-15 (MPVSLSTALRVVGTS) are cytoplasmic. A helical membrane pass occupies residues 16 to 36 (LFALAVLGGILAAYVTGYQFI). Residues 37–44 (HTEKHYLS) are Extracellular-facing. A helical transmembrane segment spans residues 45 to 65 (FGLYGAILGLHLFIQSLFAFL). Residues 66 to 398 (EHRRMRAERQ…NALWFHKHHL (333 aa)) are Cytoplasmic-facing. A helical membrane pass occupies residues 399-419 (WMTYESVVTGFFPFFLIATVI). Over 420 to 429 (QLFYRGRIWN) the chain is Extracellular. A helical membrane pass occupies residues 430–450 (ILLFLLTVQLVGIIKATYACF). Topologically, residues 451–456 (LRGSAE) are cytoplasmic. Residues 457–477 (MIFVSLYALLYMSSLLPAKMF) form a helical membrane-spanning segment. Over 478–494 (AIATINKSGWGTSGRRT) the chain is Extracellular. Residues 495–515 (IVVNFVGLLPVSVWAAVLLGG) traverse the membrane as a helical segment. The Cytoplasmic segment spans residues 516–530 (LAYTAYSQDLLSDTE). Residues 531-551 (VAFLISGAVLYACYWVALLTL) form a helical membrane-spanning segment. The Extracellular segment spans residues 552–574 (YLAMVARRCGKRKEQCGLVFAEV).

Belongs to the NodC/HAS family. It depends on Mg(2+) as a cofactor. Post-translationally, O-GlcNAcylation increases the hyaluronan synthase activity, HAS3 stability and its plasma membrane residence. The concentration of UDP-GlcNAc controls the level of O-GlcNAc modification.

It is found in the cell membrane. Its subcellular location is the golgi apparatus membrane. The protein localises to the golgi apparatus. It localises to the trans-Golgi network membrane. The protein resides in the cytoplasmic vesicle. The catalysed reaction is [hyaluronan](n) + UDP-N-acetyl-alpha-D-glucosamine = N-acetyl-beta-D-glucosaminyl-(1-&gt;4)-[hyaluronan](n) + UDP + H(+). The enzyme catalyses N-acetyl-beta-D-glucosaminyl-(1-&gt;4)-[hyaluronan](n) + UDP-alpha-D-glucuronate = [hyaluronan](n+1) + UDP + H(+). It functions in the pathway glycan biosynthesis; hyaluronan biosynthesis. Its function is as follows. Catalyzes the addition of GlcNAc or GlcUA monosaccharides to the nascent hyaluronan polymer. Therefore, it is essential to hyaluronan synthesis a major component of most extracellular matrices that has a structural role in tissues architectures and regulates cell adhesion, migration and differentiation. This is one of three isoenzymes responsible for cellular hyaluronan synthesis. The sequence is that of Hyaluronan synthase 3 (HAS3) from Gallus gallus (Chicken).